Reading from the N-terminus, the 526-residue chain is Flavonoid 3'-monooxygenase CYP75B3 (526 aa).

A helical transmembrane segment spans residues 6–26 (LPLLLGSLAVSAAVWYLVYFL). Cys461 provides a ligand contact to heme.

The protein belongs to the cytochrome P450 family. Heme is required as a cofactor.

It is found in the membrane. It catalyses the reaction a 3'-unsubstituted flavone + reduced [NADPH--hemoprotein reductase] + O2 = a 3'-hydroxyflavone + oxidized [NADPH--hemoprotein reductase] + H2O + H(+). It participates in secondary metabolite biosynthesis; flavonoid biosynthesis. Its function is as follows. Catalyzes the 3'-hydroxylation of the flavonoid B-ring to the 3',4'-hydroxylated state. Catalyzes the 3'-hydroxylation of apigenin to generate luteolin. The polypeptide is Flavonoid 3'-monooxygenase CYP75B3 (Oryza sativa subsp. japonica (Rice)).